Consider the following 419-residue polypeptide: UDP-N-acetylglucosamine 1-carboxyvinyltransferase (419 aa).

A phosphoenolpyruvate-binding site is contributed by 22 to 23 (KN). R93 is a UDP-N-acetyl-alpha-D-glucosamine binding site. C117 acts as the Proton donor in catalysis. C117 is modified (2-(S-cysteinyl)pyruvic acid O-phosphothioketal). Residues D307 and I329 each coordinate UDP-N-acetyl-alpha-D-glucosamine.

It belongs to the EPSP synthase family. MurA subfamily.

It localises to the cytoplasm. It catalyses the reaction phosphoenolpyruvate + UDP-N-acetyl-alpha-D-glucosamine = UDP-N-acetyl-3-O-(1-carboxyvinyl)-alpha-D-glucosamine + phosphate. It participates in cell wall biogenesis; peptidoglycan biosynthesis. Cell wall formation. Adds enolpyruvyl to UDP-N-acetylglucosamine. In Shewanella sp. (strain MR-7), this protein is UDP-N-acetylglucosamine 1-carboxyvinyltransferase.